Reading from the N-terminus, the 215-residue chain is Cytochrome b6 (215 aa).

A helical transmembrane segment spans residues I32–F52. Position 35 (C35) interacts with heme c. Residues H86 and H100 each contribute to the heme b site. The next 3 helical transmembrane spans lie at A90–F110, L116–Y136, and L186–I206. Residues H187 and H202 each coordinate heme b.

Belongs to the cytochrome b family. PetB subfamily. The 4 large subunits of the cytochrome b6-f complex are cytochrome b6, subunit IV (17 kDa polypeptide, PetD), cytochrome f and the Rieske protein, while the 4 small subunits are PetG, PetL, PetM and PetN. The complex functions as a dimer. The cofactor is heme b. Requires heme c as cofactor.

The protein localises to the plastid. Its subcellular location is the chloroplast thylakoid membrane. Functionally, component of the cytochrome b6-f complex, which mediates electron transfer between photosystem II (PSII) and photosystem I (PSI), cyclic electron flow around PSI, and state transitions. The chain is Cytochrome b6 from Pinus koraiensis (Korean pine).